We begin with the raw amino-acid sequence, 350 residues long: MAASIPETQKGVIFYENGGELQYKDIPVPKPKANELLINVKYSGVCHTDLHAWKGDWPLPTKLPLVGGHEGAGVVVAMGENVKGWKIGDFAGIKWLNGSCMSCEYCELSNESNCPEADLSGYTHDGSFQQYATADAVQAAKIPVGTDLAEVAPVLCAGVTVYKALKSANLKAGDWVAISGAAGGLGSLAVQYAKAMGYRVLGIDAGEEKAKLFKDLGGEYFIDFTKSKNIPEEVIEATKGGAHGVINVSVSEFAIEQSTNYVRSNGTVVLVGLPRDAKCKSDVFNQVVKSISIVGSYVGNRADTREAIDFFSRGLVKAPIHVVGLSELPSIYEKMEKGAIVGRYVVDTSK.

Residues C46, H69, C100, C103, C106, C114, and C156 each contribute to the Zn(2+) site. NAD(+) is bound by residues G180–G186, D204, K209, V271–L273, and R343.

It belongs to the zinc-containing alcohol dehydrogenase family. Homotetramer. Zn(2+) is required as a cofactor.

The protein localises to the cytoplasm. The catalysed reaction is a primary alcohol + NAD(+) = an aldehyde + NADH + H(+). The enzyme catalyses a secondary alcohol + NAD(+) = a ketone + NADH + H(+). In Kluyveromyces lactis (strain ATCC 8585 / CBS 2359 / DSM 70799 / NBRC 1267 / NRRL Y-1140 / WM37) (Yeast), this protein is Alcohol dehydrogenase 1 (ADH1).